A 216-amino-acid polypeptide reads, in one-letter code: uncharacterized protein (216 aa).

This is an uncharacterized protein from Saccharomyces cerevisiae (strain ATCC 204508 / S288c) (Baker's yeast).